We begin with the raw amino-acid sequence, 131 residues long: Large ribosomal subunit protein bL12 (131 aa).

The protein belongs to the bacterial ribosomal protein bL12 family. As to quaternary structure, homodimer. Part of the ribosomal stalk of the 50S ribosomal subunit. Forms a multimeric L10(L12)X complex, where L10 forms an elongated spine to which 2 to 4 L12 dimers bind in a sequential fashion. Binds GTP-bound translation factors.

In terms of biological role, forms part of the ribosomal stalk which helps the ribosome interact with GTP-bound translation factors. Is thus essential for accurate translation. The protein is Large ribosomal subunit protein bL12 of Prochlorococcus marinus (strain MIT 9301).